Consider the following 98-residue polypeptide: A-type ATP synthase subunit F (98 aa).

This sequence belongs to the V-ATPase F subunit family. In terms of assembly, the A-type ATPase is composed of subunits A(3), B(3), C, D, E(1 or 2), F, H(2), I and K(x).

Its subcellular location is the cell membrane. Component of the A-type ATP synthase that produces ATP from ADP in the presence of a proton gradient across the membrane. The polypeptide is A-type ATP synthase subunit F (Methanocaldococcus jannaschii (strain ATCC 43067 / DSM 2661 / JAL-1 / JCM 10045 / NBRC 100440) (Methanococcus jannaschii)).